Here is a 359-residue protein sequence, read N- to C-terminus: MLRAPKCSRCRNHGYLVPVKGHTGKCRWKQCICDKCYLITERQKIMAAQKVLRTQAAEEQVATVGTQGPQLPPRAPAAAATALSSSICPLPRAVPGGVGPGPTATCFLERPPQAPSPGPSTFQLGPSGRPGPSTFQPGPGAPGGLRDRSSAWLPQLMPQAPRPELCYPDQHLPVRPVPVPGPVRPVPRLPFADYGHPLRFKSDHVVGAGNPEREPFKQCPACVPVSPYQSFPLSEGQDSSSALGVPQQRGFRHVSCSPYHRSGLVSEPARDLQPTYCSPPPPPPPPPPPPLPAPPPQPQQPHFLPPGYLSALHFLPPPPPPPSPPSFSLTYDTDKENTNDQDAEAPTEPSQDSPQEQSN.

A DNA-binding region (DM) is located at residues 7-54 (CSRCRNHGYLVPVKGHTGKCRWKQCICDKCYLITERQKIMAAQKVLRT). 2 disordered regions span residues 111-149 (PPQA…RDRS) and 262-359 (SGLV…EQSN). Pro residues-rich tracts occupy residues 277 to 299 (CSPP…PQPQ) and 315 to 325 (LPPPPPPPSPP). Positions 348–359 (EPSQDSPQEQSN) are enriched in polar residues.

It belongs to the DMRT family. Brain.

Its subcellular location is the nucleus. In Mus musculus (Mouse), this protein is Doublesex- and mab-3-related transcription factor B1 (Dmrtb1).